Reading from the N-terminus, the 376-residue chain is UPF0754 membrane protein BLi01057/BL02871 (376 aa).

Transmembrane regions (helical) follow at residues 1–21 and 356–376; these read MYVF…GAVT and YLGG…VILI.

Belongs to the UPF0754 family.

It localises to the cell membrane. This Bacillus licheniformis (strain ATCC 14580 / DSM 13 / JCM 2505 / CCUG 7422 / NBRC 12200 / NCIMB 9375 / NCTC 10341 / NRRL NRS-1264 / Gibson 46) protein is UPF0754 membrane protein BLi01057/BL02871.